Consider the following 232-residue polypeptide: Rho-related GTP-binding protein Rho6 (232 aa).

Residues 23-28 (QCGKTA), 38-45 (YPETYVPT), 67-71 (DTSGS), 125-128 (CKTD), and 169-170 (AF) each bind GTP. An Effector region motif is present at residues 42–50 (YVPTVFENY). The residue at position 229 (Cys-229) is a Cysteine methyl ester. A lipid anchor (S-geranylgeranyl cysteine) is attached at Cys-229. A propeptide spans 230–232 (SIM) (removed in mature form).

The protein belongs to the small GTPase superfamily. Rho family. In terms of assembly, binds GRB7 and PLXNB1. Interacts with UBXD5. Interacts with PLXNA2. In terms of tissue distribution, mostly expressed in brain and liver.

It localises to the cell membrane. The protein resides in the cytoplasm. It is found in the cytoskeleton. Functionally, lacks intrinsic GTPase activity. Has a low affinity for GDP, and constitutively binds GTP. Controls rearrangements of the actin cytoskeleton. Induces the Rac-dependent neuritic process formation in part by disruption of the cortical actin filaments. Causes the formation of many neuritic processes from the cell body with disruption of the cortical actin filaments. The polypeptide is Rho-related GTP-binding protein Rho6 (RND1) (Homo sapiens (Human)).